The chain runs to 487 residues: Malonate-semialdehyde dehydrogenase 3 (487 aa).

NAD(+) is bound by residues Phe154, Lys178, Glu181, Arg182, and Ser231. Catalysis depends on Cys286, which acts as the Nucleophile. NAD(+) is bound at residue Glu386.

This sequence belongs to the aldehyde dehydrogenase family. IolA subfamily. As to quaternary structure, homotetramer.

The enzyme catalyses 3-oxopropanoate + NAD(+) + CoA + H2O = hydrogencarbonate + acetyl-CoA + NADH + H(+). It catalyses the reaction 2-methyl-3-oxopropanoate + NAD(+) + CoA + H2O = propanoyl-CoA + hydrogencarbonate + NADH + H(+). It functions in the pathway polyol metabolism; myo-inositol degradation into acetyl-CoA; acetyl-CoA from myo-inositol: step 7/7. Its function is as follows. Catalyzes the oxidation of malonate semialdehyde (MSA) and methylmalonate semialdehyde (MMSA) into acetyl-CoA and propanoyl-CoA, respectively. Is involved in a myo-inositol catabolic pathway. Bicarbonate, and not CO2, is the end-product of the enzymatic reaction. In Bacillus cereus (strain ZK / E33L), this protein is Malonate-semialdehyde dehydrogenase 3.